A 319-amino-acid chain; its full sequence is Probable NAD(P)H-dependent D-xylose reductase xyl1 (319 aa).

Tyr50 serves as the catalytic Proton donor. Residue His112 participates in substrate binding. NAD(+)-binding positions include Ser166–Asn167, Ser215–Glu224, and Lys271–Asn281.

The protein belongs to the aldo/keto reductase family.

It carries out the reaction xylitol + NAD(+) = D-xylose + NADH + H(+). It catalyses the reaction xylitol + NADP(+) = D-xylose + NADPH + H(+). It participates in carbohydrate metabolism; D-xylose degradation. Catalyzes the initial reaction in the xylose utilization pathway by reducing D-xylose into xylitol. Xylose is a major component of hemicelluloses such as xylan. Most fungi utilize D-xylose via three enzymatic reactions, xylose reductase (XR), xylitol dehydrogenase (XDH), and xylulokinase, to form xylulose 5-phosphate, which enters pentose phosphate pathway. This chain is Probable NAD(P)H-dependent D-xylose reductase xyl1 (xyl1), found in Aspergillus oryzae (strain ATCC 42149 / RIB 40) (Yellow koji mold).